A 638-amino-acid polypeptide reads, in one-letter code: Chaperone protein DnaK (638 aa).

The residue at position 200 (Thr-200) is a Phosphothreonine; by autocatalysis. Residues 598–621 are disordered; the sequence is SLHMAATAEQQSGSTGAGAGASAK.

Belongs to the heat shock protein 70 family.

In terms of biological role, acts as a chaperone. This is Chaperone protein DnaK from Xylella fastidiosa (strain M23).